The sequence spans 354 residues: Histidinol-phosphate aminotransferase (354 aa).

The residue at position 210 (Lys210) is an N6-(pyridoxal phosphate)lysine.

The protein belongs to the class-II pyridoxal-phosphate-dependent aminotransferase family. Histidinol-phosphate aminotransferase subfamily. Homodimer. Requires pyridoxal 5'-phosphate as cofactor.

The catalysed reaction is L-histidinol phosphate + 2-oxoglutarate = 3-(imidazol-4-yl)-2-oxopropyl phosphate + L-glutamate. It functions in the pathway amino-acid biosynthesis; L-histidine biosynthesis; L-histidine from 5-phospho-alpha-D-ribose 1-diphosphate: step 7/9. This chain is Histidinol-phosphate aminotransferase, found in Clostridium botulinum (strain 657 / Type Ba4).